A 789-amino-acid polypeptide reads, in one-letter code: Probable 3-hydroxyacyl-CoA dehydrogenase (789 aa).

It belongs to the 3-hydroxyacyl-CoA dehydrogenase family.

It catalyses the reaction a (3S)-3-hydroxyacyl-CoA + NAD(+) = a 3-oxoacyl-CoA + NADH + H(+). The protein operates within lipid metabolism; fatty acid beta-oxidation. In terms of biological role, involved in the degradation of long-chain fatty acids. The polypeptide is Probable 3-hydroxyacyl-CoA dehydrogenase (fadN) (Bacillus subtilis (strain 168)).